Reading from the N-terminus, the 278-residue chain is Small ribosomal subunit protein uS3 (278 aa).

Positions 38–106 (IRKLLATGLE…QVQLNILEVK (69 aa)) constitute a KH type-2 domain. Positions 215–278 (AAAAPAGADR…AAGQPETTES (64 aa)) are disordered. Residues 238-278 (SGASGTTATSTDAGRAATEEAPATDAAATAPAAGQPETTES) show a composition bias toward low complexity.

Belongs to the universal ribosomal protein uS3 family. Part of the 30S ribosomal subunit. Forms a tight complex with proteins S10 and S14.

Its function is as follows. Binds the lower part of the 30S subunit head. Binds mRNA in the 70S ribosome, positioning it for translation. This is Small ribosomal subunit protein uS3 from Mycolicibacterium gilvum (strain PYR-GCK) (Mycobacterium gilvum (strain PYR-GCK)).